The primary structure comprises 339 residues: uncharacterized protein (339 aa).

Residues I54, K78, D101, N128, Y213, and K217 each coordinate NADP(+). Catalysis depends on Y213, which acts as the Proton donor. The active-site Lowers pKa of active site Tyr is K217.

This sequence belongs to the short-chain dehydrogenases/reductases (SDR) family.

This is an uncharacterized protein from Schizosaccharomyces pombe (strain 972 / ATCC 24843) (Fission yeast).